The primary structure comprises 255 residues: Pyrroloquinoline-quinone synthase (255 aa).

It belongs to the PqqC family.

The enzyme catalyses 6-(2-amino-2-carboxyethyl)-7,8-dioxo-1,2,3,4,7,8-hexahydroquinoline-2,4-dicarboxylate + 3 O2 = pyrroloquinoline quinone + 2 H2O2 + 2 H2O + H(+). The protein operates within cofactor biosynthesis; pyrroloquinoline quinone biosynthesis. Its function is as follows. Ring cyclization and eight-electron oxidation of 3a-(2-amino-2-carboxyethyl)-4,5-dioxo-4,5,6,7,8,9-hexahydroquinoline-7,9-dicarboxylic-acid to PQQ. The chain is Pyrroloquinoline-quinone synthase from Cereibacter sphaeroides (strain ATCC 17025 / ATH 2.4.3) (Rhodobacter sphaeroides).